Consider the following 1142-residue polypeptide: Enamelin (1142 aa).

The N-terminal stretch at 1–38 (MLLSCRHGASSPKLDNLVPSGKMKILLVFLGLLCYSAA) is a signal peptide. Ser-53 is modified (phosphoserine). Disordered stretches follow at residues 90–347 (YQMP…FYRN), 374–513 (YRRV…IIPK), 543–587 (TEGI…LSHG), and 603–662 (RENS…FPGQ). Residues 128–148 (QPQPKTPTPKQPLNEPSPTPT) show a composition bias toward pro residues. Phosphoserine occurs at positions 191 and 216. Over residues 223-234 (DFEKPKEKDPPK) the composition is skewed to basic and acidic residues. Composition is skewed to polar residues over residues 243 to 303 (SVNT…SQSP) and 381 to 395 (TARS…NSAN). Residues Asn-245, Asn-252, Asn-264, and Asn-291 are each glycosylated (N-linked (GlcNAc...) asparagine). Positions 277-514 (NPRSNPTGQN…QTQTQIIPKG (238 aa)) are excised as a propeptide. Residues 431–442 (PREKQVSQKERT) are compositionally biased toward basic and acidic residues. A compositionally biased stretch (polar residues) spans 453–467 (WRNSQDYGINKSNYK). An N-linked (GlcNAc...) asparagine glycan is attached at Asn-462. Pro-547 carries the post-translational modification Hydroxyproline. A compositionally biased stretch (basic and acidic residues) spans 570 to 582 (FKEDPGRQEEHLP). A propeptide spanning residues 666-669 (DMEE) is cleaved from the precursor. Positions 787 to 816 (NLYKTPTSSPHQKENQPYSNNSPAGLQKNP) are enriched in polar residues. Disordered regions lie at residues 787-820 (NLYK…TWHE), 921-965 (TSIV…SQLS), and 1020-1049 (VFGT…QQRQ). A glycan (N-linked (GlcNAc...) asparagine) is linked at Asn-929. A compositionally biased stretch (polar residues) spans 952 to 965 (LRRSTPCSVKSQLS). Asn-1040 carries an N-linked (GlcNAc...) asparagine glycan.

Post-translationally, proteolytically cleaved into several smaller polypeptides. Cleavage of N-terminal region of enamelin occurs soon after secretion. Phosphorylated by FAM20C in vitro. As to expression, expressed by secretory-phase ameloblasts. Intact enamelin and large-molecular-weight enamelins are limited to the most superficial layer of the developing enamel matrix, while low-molecular-weight enamelins are observed in deeper enamelin. Preferential localization among the crystallites in rod and interrod enamel.

It localises to the secreted. The protein localises to the extracellular space. Its subcellular location is the extracellular matrix. Involved in the mineralization and structural organization of enamel. Involved in the extension of enamel during the secretory stage of dental enamel formation. This is Enamelin (ENAM) from Sus scrofa (Pig).